Consider the following 1012-residue polypeptide: DNA polymerase catalytic subunit (1012 aa).

Belongs to the DNA polymerase type-B family.

It is found in the host nucleus. It catalyses the reaction DNA(n) + a 2'-deoxyribonucleoside 5'-triphosphate = DNA(n+1) + diphosphate. Its function is as follows. Replicates viral genomic DNA. The polypeptide is DNA polymerase catalytic subunit (U38) (Human herpesvirus 6B (strain Z29) (HHV-6 variant B)).